The following is a 259-amino-acid chain: Ribosomal RNA small subunit methyltransferase J (259 aa).

S-adenosyl-L-methionine is bound by residues 107-108, 123-124, 159-160, and aspartate 177; these read RD, ER, and SS.

It belongs to the methyltransferase superfamily. RsmJ family.

It is found in the cytoplasm. It carries out the reaction guanosine(1516) in 16S rRNA + S-adenosyl-L-methionine = N(2)-methylguanosine(1516) in 16S rRNA + S-adenosyl-L-homocysteine + H(+). In terms of biological role, specifically methylates the guanosine in position 1516 of 16S rRNA. The polypeptide is Ribosomal RNA small subunit methyltransferase J (Shewanella loihica (strain ATCC BAA-1088 / PV-4)).